The chain runs to 244 residues: NAD-dependent protein deacetylase (244 aa).

In terms of domain architecture, Deacetylase sirtuin-type spans 1 to 244 (MSATERQLQY…IGDTCRQLRA (244 aa)). The NAD(+) site is built by Ala27, Thr31, Phe38, Arg39, Gln107, Ile109, Asp110, and His125. Phe38 is a nicotinamide binding site. Positions 109 and 110 each coordinate nicotinamide. His125 (proton acceptor) is an active-site residue. Zn(2+) contacts are provided by Cys133, Cys136, Cys153, and Cys156. NAD(+) contacts are provided by Ser192, Ser193, Asn217, and Ile235.

It belongs to the sirtuin family. Class U subfamily. Requires Zn(2+) as cofactor.

Its subcellular location is the cytoplasm. The catalysed reaction is N(6)-acetyl-L-lysyl-[protein] + NAD(+) + H2O = 2''-O-acetyl-ADP-D-ribose + nicotinamide + L-lysyl-[protein]. In terms of biological role, NAD-dependent protein deacetylase which modulates the activities of several enzymes which are inactive in their acetylated form. This Chromobacterium violaceum (strain ATCC 12472 / DSM 30191 / JCM 1249 / CCUG 213 / NBRC 12614 / NCIMB 9131 / NCTC 9757 / MK) protein is NAD-dependent protein deacetylase.